A 371-amino-acid polypeptide reads, in one-letter code: Transposase for insertion sequence element IS421 (371 aa).

Belongs to the transposase 11 family.

Functionally, involved in the transposition of the insertion sequence IS421. The protein is Transposase for insertion sequence element IS421 of Escherichia coli.